Here is a 755-residue protein sequence, read N- to C-terminus: Putative two-component response regulator-like APRR6 (755 aa).

The region spanning 14–128 (SILLIDHDTA…DIKNMWQHVF (115 aa)) is the Response regulatory domain.

Belongs to the ARR-like family.

Its subcellular location is the nucleus. This chain is Putative two-component response regulator-like APRR6 (APRR6), found in Arabidopsis thaliana (Mouse-ear cress).